Reading from the N-terminus, the 166-residue chain is Cytochrome c-type biogenesis protein CcmE (166 aa).

Topologically, residues 1 to 13 (MNFLPKSRKARRR) are cytoplasmic. The chain crosses the membrane as a helical; Signal-anchor for type II membrane protein span at residues 14 to 34 (LTILAVAAPVVALAVGLALWG). Over 35–166 (MRDAISLFYT…QGYKPGKPNT (132 aa)) the chain is Periplasmic. Residues histidine 128 and tyrosine 132 each coordinate heme. The segment at 143–166 (EQGEWRGDGQAPSYQGYKPGKPNT) is disordered.

This sequence belongs to the CcmE/CycJ family.

Its subcellular location is the cell inner membrane. Its function is as follows. Heme chaperone required for the biogenesis of c-type cytochromes. Transiently binds heme delivered by CcmC and transfers the heme to apo-cytochromes in a process facilitated by CcmF and CcmH. In Caulobacter sp. (strain K31), this protein is Cytochrome c-type biogenesis protein CcmE.